The following is a 265-amino-acid chain: Hydroxyethylthiazole kinase (265 aa).

M55 provides a ligand contact to substrate. Residues R130 and S176 each contribute to the ATP site. Substrate is bound at residue G203.

It belongs to the Thz kinase family. Requires Mg(2+) as cofactor.

It carries out the reaction 5-(2-hydroxyethyl)-4-methylthiazole + ATP = 4-methyl-5-(2-phosphooxyethyl)-thiazole + ADP + H(+). It participates in cofactor biosynthesis; thiamine diphosphate biosynthesis; 4-methyl-5-(2-phosphoethyl)-thiazole from 5-(2-hydroxyethyl)-4-methylthiazole: step 1/1. Catalyzes the phosphorylation of the hydroxyl group of 4-methyl-5-beta-hydroxyethylthiazole (THZ). The chain is Hydroxyethylthiazole kinase from Leptospira interrogans serogroup Icterohaemorrhagiae serovar Lai (strain 56601).